We begin with the raw amino-acid sequence, 134 residues long: Small ribosomal subunit protein uS8 (134 aa).

Belongs to the universal ribosomal protein uS8 family. Part of the 30S ribosomal subunit. Contacts proteins S5 and S12.

Its function is as follows. One of the primary rRNA binding proteins, it binds directly to 16S rRNA central domain where it helps coordinate assembly of the platform of the 30S subunit. The sequence is that of Small ribosomal subunit protein uS8 from Pseudothermotoga lettingae (strain ATCC BAA-301 / DSM 14385 / NBRC 107922 / TMO) (Thermotoga lettingae).